The chain runs to 170 residues: Adenine phosphoribosyltransferase (170 aa).

The protein belongs to the purine/pyrimidine phosphoribosyltransferase family. In terms of assembly, homodimer.

The protein resides in the cytoplasm. The catalysed reaction is AMP + diphosphate = 5-phospho-alpha-D-ribose 1-diphosphate + adenine. It functions in the pathway purine metabolism; AMP biosynthesis via salvage pathway; AMP from adenine: step 1/1. Its function is as follows. Catalyzes a salvage reaction resulting in the formation of AMP, that is energically less costly than de novo synthesis. This Acaryochloris marina (strain MBIC 11017) protein is Adenine phosphoribosyltransferase.